A 128-amino-acid polypeptide reads, in one-letter code: Ribonuclease P protein component (128 aa).

Belongs to the RnpA family. Consists of a catalytic RNA component (M1 or rnpB) and a protein subunit.

The catalysed reaction is Endonucleolytic cleavage of RNA, removing 5'-extranucleotides from tRNA precursor.. Functionally, RNaseP catalyzes the removal of the 5'-leader sequence from pre-tRNA to produce the mature 5'-terminus. It can also cleave other RNA substrates such as 4.5S RNA. The protein component plays an auxiliary but essential role in vivo by binding to the 5'-leader sequence and broadening the substrate specificity of the ribozyme. In Prochlorococcus marinus (strain MIT 9303), this protein is Ribonuclease P protein component.